Here is a 323-residue protein sequence, read N- to C-terminus: tRNA U34 carboxymethyltransferase (323 aa).

Carboxy-S-adenosyl-L-methionine contacts are provided by residues Lys-91, Trp-105, Lys-110, Gly-130, 152–154, 181–182, Met-196, Tyr-200, and Arg-315; these read DPT and IE.

This sequence belongs to the class I-like SAM-binding methyltransferase superfamily. CmoB family. In terms of assembly, homotetramer.

It carries out the reaction carboxy-S-adenosyl-L-methionine + 5-hydroxyuridine(34) in tRNA = 5-carboxymethoxyuridine(34) in tRNA + S-adenosyl-L-homocysteine + H(+). Functionally, catalyzes carboxymethyl transfer from carboxy-S-adenosyl-L-methionine (Cx-SAM) to 5-hydroxyuridine (ho5U) to form 5-carboxymethoxyuridine (cmo5U) at position 34 in tRNAs. The chain is tRNA U34 carboxymethyltransferase from Salmonella enteritidis PT4 (strain P125109).